Consider the following 239-residue polypeptide: Purine nucleoside phosphorylase DeoD-type (239 aa).

His-5 is a binding site for a purine D-ribonucleoside. Residues Gly-21, Arg-25, Arg-44, and 89–92 (RVGS) each bind phosphate. A purine D-ribonucleoside contacts are provided by residues 180–182 (EME) and 204–205 (SD). Asp-205 functions as the Proton donor in the catalytic mechanism.

It belongs to the PNP/UDP phosphorylase family. In terms of assembly, homohexamer; trimer of homodimers.

The enzyme catalyses a purine D-ribonucleoside + phosphate = a purine nucleobase + alpha-D-ribose 1-phosphate. The catalysed reaction is a purine 2'-deoxy-D-ribonucleoside + phosphate = a purine nucleobase + 2-deoxy-alpha-D-ribose 1-phosphate. Its function is as follows. Catalyzes the reversible phosphorolytic breakdown of the N-glycosidic bond in the beta-(deoxy)ribonucleoside molecules, with the formation of the corresponding free purine bases and pentose-1-phosphate. The sequence is that of Purine nucleoside phosphorylase DeoD-type from Klebsiella pneumoniae.